The chain runs to 302 residues: Acetylglutamate kinase (302 aa).

Substrate contacts are provided by residues 67–68, arginine 89, and asparagine 189; that span reads GG.

The protein belongs to the acetylglutamate kinase family. ArgB subfamily.

It localises to the cytoplasm. It carries out the reaction N-acetyl-L-glutamate + ATP = N-acetyl-L-glutamyl 5-phosphate + ADP. It participates in amino-acid biosynthesis; L-arginine biosynthesis; N(2)-acetyl-L-ornithine from L-glutamate: step 2/4. In terms of biological role, catalyzes the ATP-dependent phosphorylation of N-acetyl-L-glutamate. The chain is Acetylglutamate kinase from Streptomyces clavuligerus.